Here is a 193-residue protein sequence, read N- to C-terminus: Ribosomal RNA small subunit methyltransferase G (193 aa).

S-adenosyl-L-methionine contacts are provided by residues Gly-72, Phe-77, 123-124 (IE), and Arg-137.

The protein belongs to the methyltransferase superfamily. RNA methyltransferase RsmG family.

It localises to the cytoplasm. The catalysed reaction is guanosine(527) in 16S rRNA + S-adenosyl-L-methionine = N(7)-methylguanosine(527) in 16S rRNA + S-adenosyl-L-homocysteine. In terms of biological role, specifically methylates the N7 position of guanine in position 527 of 16S rRNA. In Wolinella succinogenes (strain ATCC 29543 / DSM 1740 / CCUG 13145 / JCM 31913 / LMG 7466 / NCTC 11488 / FDC 602W) (Vibrio succinogenes), this protein is Ribosomal RNA small subunit methyltransferase G.